Here is a 339-residue protein sequence, read N- to C-terminus: UDP-N-acetylenolpyruvoylglucosamine reductase (339 aa).

An FAD-binding PCMH-type domain is found at 16 to 188 (GIAATARYYS…LQVTLRLNKQ (173 aa)). The active site involves R164. S238 acts as the Proton donor in catalysis. The active site involves E334.

The protein belongs to the MurB family. FAD serves as cofactor.

The protein localises to the cytoplasm. The enzyme catalyses UDP-N-acetyl-alpha-D-muramate + NADP(+) = UDP-N-acetyl-3-O-(1-carboxyvinyl)-alpha-D-glucosamine + NADPH + H(+). It participates in cell wall biogenesis; peptidoglycan biosynthesis. Functionally, cell wall formation. This Amoebophilus asiaticus (strain 5a2) protein is UDP-N-acetylenolpyruvoylglucosamine reductase.